The sequence spans 445 residues: Pre-B-cell leukemia transcription factor 2 (445 aa).

Residues 13-44 form a disordered region; it reads VGIPGLPIHGGPQTLTPHPMHEPPTDNGEPRK. Over residues 31–44 the composition is skewed to basic and acidic residues; that stretch reads PMHEPPTDNGEPRK. A PBC domain is found at 42–236; that stretch reads PRKQDIGDIL…VMILRSRFLD (195 aa). A PBC-A region spans residues 49–128; it reads DILQQIMTIT…EGVAGPEKGG (80 aa). A PBC-B region spans residues 131–236; the sequence is AAAAAAAAAS…VMILRSRFLD (106 aa). The segment at residues 237 to 299 is a DNA-binding region (homeobox; TALE-type); sequence ARRKRRNFSK…NKRIRYKKNI (63 aa). Residues 319–332 are compositionally biased toward polar residues; the sequence is QGGHSGANSPTTPT. A disordered region spans residues 319–338; sequence QGGHSGANSPTTPTSAGSGG.

It belongs to the TALE/PBX homeobox family.

It localises to the nucleus. In terms of biological role, transcriptional activator that binds the sequence 5'-ATCAATCAA-3'. In Xenopus laevis (African clawed frog), this protein is Pre-B-cell leukemia transcription factor 2 (pbx2).